A 164-amino-acid chain; its full sequence is Large ribosomal subunit protein uL10 (164 aa).

It belongs to the universal ribosomal protein uL10 family. As to quaternary structure, part of the ribosomal stalk of the 50S ribosomal subunit. The N-terminus interacts with L11 and the large rRNA to form the base of the stalk. The C-terminus forms an elongated spine to which L12 dimers bind in a sequential fashion forming a multimeric L10(L12)X complex.

Forms part of the ribosomal stalk, playing a central role in the interaction of the ribosome with GTP-bound translation factors. The sequence is that of Large ribosomal subunit protein uL10 from Pseudoalteromonas translucida (strain TAC 125).